A 341-amino-acid polypeptide reads, in one-letter code: Fructose-1,6-bisphosphatase class 1 1 (341 aa).

4 residues coordinate Mg(2+): Glu-92, Asp-114, Leu-116, and Asp-117. Residues 117 to 120 (DGSS), Asn-209, and Lys-275 contribute to the substrate site. Glu-281 contacts Mg(2+).

Belongs to the FBPase class 1 family. As to quaternary structure, homotetramer. Mg(2+) serves as cofactor.

The protein localises to the cytoplasm. It carries out the reaction beta-D-fructose 1,6-bisphosphate + H2O = beta-D-fructose 6-phosphate + phosphate. The protein operates within carbohydrate biosynthesis; gluconeogenesis. This is Fructose-1,6-bisphosphatase class 1 1 from Leptothrix cholodnii (strain ATCC 51168 / LMG 8142 / SP-6) (Leptothrix discophora (strain SP-6)).